The following is a 257-amino-acid chain: Major prion protein (257 aa).

The first 24 residues, 1-24 (MVKSHIGGWILLLFVATWSDVGLC), serve as a signal peptide directing secretion. An interaction with GRB2, ERI3 and SYN1 region spans residues 25-234 (KKRPKPGGWN…ESEAYYQRGA (210 aa)). The segment at 28–110 (PKPGGWNTGG…GQWGKPNKPK (83 aa)) is disordered. Gly residues-rich tracts occupy residues 33–48 (WNTGGGSRYPGQGSPG) and 55–101 (QGGG…GSHG). A run of 5 repeats spans residues 54–62 (PQGGGGWGQ), 63–70 (PHGGGWGQ), 71–78 (PHGGGWGQ), 79–86 (PHGGGWGQ), and 87–95 (PHGGGGWGQ). The 5 X 8 AA tandem repeats of P-H-G-G-G-W-G-Q stretch occupies residues 54-95 (PQGGGGWGQPHGGGWGQPHGGGWGQPHGGGWGQPHGGGGWGQ). Residues His64, Gly65, Gly66, His72, Gly73, Gly74, His80, Gly81, Gly82, His88, Gly90, and Gly91 each coordinate Cu(2+). Cys183 and Cys218 are disulfide-bonded. N-linked (GlcNAc...) asparagine glycans are attached at residues Asn185 and Asn201. A lipid anchor (GPI-anchor amidated alanine) is attached at Ala234. Residues 235 to 257 (SAILFSPPPVILLISLLILLIVG) constitute a propeptide, removed in mature form.

This sequence belongs to the prion family. In terms of assembly, monomer and homodimer. Has a tendency to aggregate into amyloid fibrils containing a cross-beta spine, formed by a steric zipper of superposed beta-strands. Soluble oligomers may represent an intermediate stage on the path to fibril formation. Copper binding may promote oligomerization. Interacts with GRB2, APP, ERI3/PRNPIP and SYN1. Mislocalized cytosolically exposed PrP interacts with MGRN1; this interaction alters MGRN1 subcellular location and causes lysosomal enlargement. Interacts with KIAA1191.

Its subcellular location is the cell membrane. It is found in the golgi apparatus. In terms of biological role, its primary physiological function is unclear. Has cytoprotective activity against internal or environmental stresses. May play a role in neuronal development and synaptic plasticity. May be required for neuronal myelin sheath maintenance. May play a role in iron uptake and iron homeostasis. Soluble oligomers are toxic to cultured neuroblastoma cells and induce apoptosis (in vitro). Association with GPC1 (via its heparan sulfate chains) targets PRNP to lipid rafts. Also provides Cu(2+) or Zn(2+) for the ascorbate-mediated GPC1 deaminase degradation of its heparan sulfate side chains. The chain is Major prion protein from Vulpes lagopus (Arctic fox).